We begin with the raw amino-acid sequence, 1043 residues long: MFKEVGEPNFPKLEEEVLAFWKREKIFQKSVENRKGGPRYTVYEGPPTANGLPHVGHAQARSYKDLFPRYKTMRGYYAPRRAGWDTHGLPVELEVEKKLGLKSKREIEAYGIERFNQACRESVFTYEKEWEAFTERIAYWVDLENAYATLEPTYIESIWWSLKNLFDRGLLYRDHKVVPYCPRCGTPLSSHEVALGYKEIQDPSVYVRFPLKEPKKLGLEKASLLIWTTTPWTLPGNVAAAVHPEYTYAAFQVGDEALILEEGLGRKLLGEGTPVLKTFPGKALEGLPYTPPYPQALEKGYFVVLADYVSQEDGTGIVHQAPAFGAEDLETARVYGLPLLKTVDEEGKLLVEPFKGLYFREANRAILRDLRGRGLLFKEESYLHSYPHCWRCSTPLMYYATESWFIKNTLFKDELIRKNQEIHWVPPHIKEGRYGEWLKNLVDWALSRNRYWGTPLPIWVCQACGKEEAIGSFQELKARATKPLPEPFDPHRPYVDQVELACACGGTMRRVPYVIDVWYDSGAMPFASLHYPFEHEEVFRESFPADFIAEGIDQTRGWFNSLHQLGVMLFGSIAFKNVICHGLILDEKGQKMSKSKGNVVDPWDIIREFGADALRWYIYVSAPPEADRRFGPNLVRETVRDYFLTLWNVYSFFVTYANLDRPDLKNPPPPEKRPEMDRWLLARMQDLIQRVTEALEAYDPTTSARALRDFVVEDLSQWYVRRNRRRFWKNEDALDREAAYATLYEALVLVATLAAPFTPFLAEVLWQNLVRSVRPEAKESVHLADWPEADPALADEALVAQMRAVLKVVDLARAARAKSGVKTRTPLPLLLVTAPTALEREGLKRFAHEIAEELNVKEVRVLEPGEEILSYRVLPNLKLLGRKYGKLVPKIREALQRERERAAALALKGEAIPLEVEGEALTLLPEEVLLEAEAPKGYQALEKDGYVAALKVEVTEALRMEGLARDLIRLLQQARKDMGLKVSDRIRVGYEAEGPYLEALKRHGPWIAEEVLATAFGEGLFGGFEARVEDEEGKAVFHLARAE.

L-isoleucyl-5'-AMP contacts are provided by P46 and H57. The 'HIGH' region motif lies at 47–57 (PTANGLPHVGH). Residues C181 and C184 each contribute to the Zn(2+) site. Positions 319 and 328 each coordinate L-valine. Zn(2+) contacts are provided by C389, C392, C461, C464, C502, and C504. Residues E550, G551, D553, Q554, and H581 each contribute to the L-isoleucyl-5'-AMP site. The 'KMSKS' region signature appears at 591 to 595 (KMSKS). Position 594 (K594) interacts with ATP.

This sequence belongs to the class-I aminoacyl-tRNA synthetase family. IleS type 2 subfamily. In terms of assembly, monomer. Zn(2+) serves as cofactor.

The protein localises to the cytoplasm. The catalysed reaction is tRNA(Ile) + L-isoleucine + ATP = L-isoleucyl-tRNA(Ile) + AMP + diphosphate. Its function is as follows. Catalyzes the attachment of isoleucine to tRNA(Ile). As IleRS can inadvertently accommodate and process structurally similar amino acids such as valine, to avoid such errors it has two additional distinct tRNA(Ile)-dependent editing activities. One activity is designated as 'pretransfer' editing and involves the hydrolysis of activated Val-AMP. The other activity is designated 'posttransfer' editing and involves deacylation of mischarged Val-tRNA(Ile). This chain is Isoleucine--tRNA ligase (ileS), found in Thermus thermophilus (strain ATCC 27634 / DSM 579 / HB8).